The primary structure comprises 61 residues: MAVPKKKTSRARRDRRRSHHALRGPGMVACPNCGEMRLPHRVCPECGYYKGRTVVAVEAVE.

Basic residues predominate over residues 1–22 (MAVPKKKTSRARRDRRRSHHAL). The tract at residues 1–24 (MAVPKKKTSRARRDRRRSHHALRG) is disordered.

The protein belongs to the bacterial ribosomal protein bL32 family.

This chain is Large ribosomal subunit protein bL32, found in Rubrobacter xylanophilus (strain DSM 9941 / JCM 11954 / NBRC 16129 / PRD-1).